We begin with the raw amino-acid sequence, 560 residues long: Light-independent protochlorophyllide reductase subunit N (560 aa).

Positions 24, 49, and 109 each coordinate [4Fe-4S] cluster. Over residues 173-182 the composition is skewed to low complexity; sequence NSLFNQSSNS. A disordered region spans residues 173–210; it reads NSLFNQSSNSPENLKTLNTKKDTFQNSTENSKTFSAEK. Residues 196–206 are compositionally biased toward polar residues; that stretch reads FQNSTENSKTF.

The protein belongs to the BchN/ChlN family. In terms of assembly, protochlorophyllide reductase is composed of three subunits; ChlL, ChlN and ChlB. Forms a heterotetramer of two ChlB and two ChlN subunits. The cofactor is [4Fe-4S] cluster.

The protein localises to the plastid. It is found in the chloroplast. It carries out the reaction chlorophyllide a + oxidized 2[4Fe-4S]-[ferredoxin] + 2 ADP + 2 phosphate = protochlorophyllide a + reduced 2[4Fe-4S]-[ferredoxin] + 2 ATP + 2 H2O. The protein operates within porphyrin-containing compound metabolism; chlorophyll biosynthesis (light-independent). Component of the dark-operative protochlorophyllide reductase (DPOR) that uses Mg-ATP and reduced ferredoxin to reduce ring D of protochlorophyllide (Pchlide) to form chlorophyllide a (Chlide). This reaction is light-independent. The NB-protein (ChlN-ChlB) is the catalytic component of the complex. In Tetradesmus obliquus (Green alga), this protein is Light-independent protochlorophyllide reductase subunit N.